The chain runs to 383 residues: Mannan endo-1,4-beta-mannosidase (383 aa).

The signal sequence occupies residues 1 to 35; sequence MRNARSTLITTAGMAFAVLGLLFALAGPSAGRAEA. The CBM10 domain maps to 339-377; sequence GGSTGGTAPNGYPYCVNGGASDPDGDGWGWENSRSCVVR.

Belongs to the glycosyl hydrolase 5 (cellulase A) family. Monomer.

It carries out the reaction Random hydrolysis of (1-&gt;4)-beta-D-mannosidic linkages in mannans, galactomannans and glucomannans.. The sequence is that of Mannan endo-1,4-beta-mannosidase (manA) from Streptomyces lividans.